Here is a 494-residue protein sequence, read N- to C-terminus: Glutamyl-tRNA(Gln) amidotransferase subunit A (494 aa).

Residues K79 and S159 each act as charge relay system in the active site. The active-site Acyl-ester intermediate is S183.

Belongs to the amidase family. GatA subfamily. In terms of assembly, heterotrimer of A, B and C subunits.

It catalyses the reaction L-glutamyl-tRNA(Gln) + L-glutamine + ATP + H2O = L-glutaminyl-tRNA(Gln) + L-glutamate + ADP + phosphate + H(+). Its function is as follows. Allows the formation of correctly charged Gln-tRNA(Gln) through the transamidation of misacylated Glu-tRNA(Gln) in organisms which lack glutaminyl-tRNA synthetase. The reaction takes place in the presence of glutamine and ATP through an activated gamma-phospho-Glu-tRNA(Gln). This Bartonella bacilliformis (strain ATCC 35685 / KC583 / Herrer 020/F12,63) protein is Glutamyl-tRNA(Gln) amidotransferase subunit A.